The sequence spans 455 residues: Phosphoglucosamine mutase (455 aa).

Serine 104 functions as the Phosphoserine intermediate in the catalytic mechanism. Mg(2+) contacts are provided by serine 104, aspartate 253, aspartate 255, and aspartate 257. Phosphoserine is present on serine 104.

It belongs to the phosphohexose mutase family. The cofactor is Mg(2+). In terms of processing, activated by phosphorylation.

It catalyses the reaction alpha-D-glucosamine 1-phosphate = D-glucosamine 6-phosphate. Functionally, catalyzes the conversion of glucosamine-6-phosphate to glucosamine-1-phosphate. This is Phosphoglucosamine mutase from Psychrobacter cryohalolentis (strain ATCC BAA-1226 / DSM 17306 / VKM B-2378 / K5).